The chain runs to 100 residues: Small ribosomal subunit protein uS14c (100 aa).

This sequence belongs to the universal ribosomal protein uS14 family. Part of the 30S ribosomal subunit.

Its subcellular location is the plastid. The protein localises to the chloroplast. Its function is as follows. Binds 16S rRNA, required for the assembly of 30S particles. The polypeptide is Small ribosomal subunit protein uS14c (Trieres chinensis (Marine centric diatom)).